A 474-amino-acid polypeptide reads, in one-letter code: MTSPIVTRFAPSPTGFLHIGGARTALFNWLYARGRCGKMLLRIEDTDRERSTTAAIDAILDGLKWLELDWDGEVIYQYSRAARHREVAEQLLASGMAYRCYATAEELAAMREKARAEGRTRLYDGMWRDRDPKDAPGDVKPTIRLRAPLTGETVIEDQVQGRVVWQNENLDDLVLLRGDGNPTYMLAVVVDDHDMGVTHVIRGDDHLINAARQKQIYDALGWTVPSMSHIPLIHGPDGSKLSKRHGALGVDAYRAMGYLPSALRNYLVRLGWSHGDQEIFSTEEMIKAFDLPAIGRSAARFDFAKLENLNGHYIRHSDDAALVRQFEDVLNYVPNGATLKAKLNDATRAQLTQAMPSLKERAKTLLELIDGAAFLFADRPLPIDAKAAALLTPDSRALIGRLHDALAAVEPWSGPATEAALRAFAETNNLKLGAVAQPLRAALTGRTTSPGIFDVLAILGRDESLGRLKDQTTS.

The 'HIGH' region signature appears at 11–21; the sequence is PSPTGFLHIGG. The 'KMSKS' region signature appears at 240-244; the sequence is KLSKR. Lys-243 is an ATP binding site.

Belongs to the class-I aminoacyl-tRNA synthetase family. Glutamate--tRNA ligase type 1 subfamily. As to quaternary structure, monomer.

The protein localises to the cytoplasm. The enzyme catalyses tRNA(Glu) + L-glutamate + ATP = L-glutamyl-tRNA(Glu) + AMP + diphosphate. In terms of biological role, catalyzes the attachment of glutamate to tRNA(Glu) in a two-step reaction: glutamate is first activated by ATP to form Glu-AMP and then transferred to the acceptor end of tRNA(Glu). This chain is Glutamate--tRNA ligase, found in Bradyrhizobium sp. (strain BTAi1 / ATCC BAA-1182).